The primary structure comprises 468 residues: 3-isopropylmalate dehydratase large subunit (468 aa).

3 residues coordinate [4Fe-4S] cluster: Cys-347, Cys-407, and Cys-410.

This sequence belongs to the aconitase/IPM isomerase family. LeuC type 1 subfamily. Heterodimer of LeuC and LeuD. [4Fe-4S] cluster is required as a cofactor.

The enzyme catalyses (2R,3S)-3-isopropylmalate = (2S)-2-isopropylmalate. The protein operates within amino-acid biosynthesis; L-leucine biosynthesis; L-leucine from 3-methyl-2-oxobutanoate: step 2/4. Catalyzes the isomerization between 2-isopropylmalate and 3-isopropylmalate, via the formation of 2-isopropylmaleate. The sequence is that of 3-isopropylmalate dehydratase large subunit from Synechococcus sp. (strain CC9311).